A 908-amino-acid chain; its full sequence is Protein translocase subunit SecA (908 aa).

Residues Gln87, 105–109 (GEGKT), and Asp512 contribute to the ATP site. Positions 866–908 (GSDEDDAIAAHTPMIRDGDKVGRNDPCPCGSGRKYKQCHGKLS) are disordered. A compositionally biased stretch (basic and acidic residues) spans 879–888 (MIRDGDKVGR). Zn(2+)-binding residues include Cys892, Cys894, Cys903, and His904. Over residues 898–908 (RKYKQCHGKLS) the composition is skewed to basic residues.

It belongs to the SecA family. As to quaternary structure, monomer and homodimer. Part of the essential Sec protein translocation apparatus which comprises SecA, SecYEG and auxiliary proteins SecDF-YajC and YidC. Zn(2+) is required as a cofactor.

The protein localises to the cell inner membrane. It localises to the cytoplasm. The catalysed reaction is ATP + H2O + cellular proteinSide 1 = ADP + phosphate + cellular proteinSide 2.. Its function is as follows. Part of the Sec protein translocase complex. Interacts with the SecYEG preprotein conducting channel. Has a central role in coupling the hydrolysis of ATP to the transfer of proteins into and across the cell membrane, serving both as a receptor for the preprotein-SecB complex and as an ATP-driven molecular motor driving the stepwise translocation of polypeptide chains across the membrane. This Shewanella oneidensis (strain ATCC 700550 / JCM 31522 / CIP 106686 / LMG 19005 / NCIMB 14063 / MR-1) protein is Protein translocase subunit SecA.